A 246-amino-acid chain; its full sequence is Probable transcriptional regulatory protein GK2594 (246 aa).

This sequence belongs to the TACO1 family.

It localises to the cytoplasm. The polypeptide is Probable transcriptional regulatory protein GK2594 (Geobacillus kaustophilus (strain HTA426)).